A 604-amino-acid polypeptide reads, in one-letter code: Terpenoid synthase 30 (604 aa).

Positions 356, 360, 500, 504, and 508 each coordinate Mg(2+). Residues 356-360 carry the DDXXD motif; degenerate motif; sequence NDVCD.

It belongs to the terpene synthase family. Tpsa subfamily. Requires Mg(2+) as cofactor. Mn(2+) serves as cofactor.

Its subcellular location is the cytoplasm. The protein operates within secondary metabolite biosynthesis; terpenoid biosynthesis. Functionally, involved in terpene biosynthesis in roots. Possesses sesquiterpene (C15) synthase activity and diterpene (C20) synthase activity in vitro. This Arabidopsis thaliana (Mouse-ear cress) protein is Terpenoid synthase 30.